A 201-amino-acid chain; its full sequence is Recombination protein RecR (201 aa).

Residues 57 to 72 (CADCRTFTEQDICTIC) form a C4-type zinc finger. One can recognise a Toprim domain in the interval 81–176 (GQICVVESPA…VASRIAHGVP (96 aa)).

The protein belongs to the RecR family.

May play a role in DNA repair. It seems to be involved in an RecBC-independent recombinational process of DNA repair. It may act with RecF and RecO. The polypeptide is Recombination protein RecR (Serratia proteamaculans (strain 568)).